The primary structure comprises 415 residues: Coiled-coil domain-containing glutamate-rich protein 1 (415 aa).

A compositionally biased stretch (basic and acidic residues) spans 1–11 (MTQTLDTKEDP). Disordered regions lie at residues 1-20 (MTQT…GWAS), 29-64 (FGPR…QQYG), 133-162 (RPPG…SPPV), 202-241 (QEKL…GQED), and 255-372 (PSLV…PLEM). Basic residues-rich tracts occupy residues 31 to 46 (PRRR…RPRY) and 135 to 156 (PGRK…RRSA). Coiled coils occupy residues 197–224 (EDMR…STAS) and 264–366 (DEEK…EEEN). The span at 211 to 220 (ALRAQQAQAA) shows a compositional bias: low complexity. Acidic residues predominate over residues 275-363 (VEEEEEGERE…EGLAEDEQTE (89 aa)).

It is found in the nucleus. Its function is as follows. Regulator of histone epigenetic modifications and chromatin compaction into the sperm head, required for histone-to-protamine (HTP) transition. HTP is a key event in which somatic histones are first replaced by testis-specific histone variants, then transition proteins (TNPs) are incorporated into the spermatid nucleus, and finally protamines (PRMs) replace the TNPs to promote chromatin condensation. The chain is Coiled-coil domain-containing glutamate-rich protein 1 (CCER1) from Bos taurus (Bovine).